Here is a 114-residue protein sequence, read N- to C-terminus: Cuticle protein AMP5 (114 aa).

Q1 carries the post-translational modification Pyrrolidone carboxylic acid. In terms of domain architecture, Chitin-binding type R&amp;R spans 18-83 (AGNYFYEFET…VDSPLIPVAP (66 aa)).

In terms of tissue distribution, arthrodial membrane.

The chain is Cuticle protein AMP5 from Homarus americanus (American lobster).